Consider the following 337-residue polypeptide: UDP-N-acetylenolpyruvoylglucosamine reductase (337 aa).

The region spanning 17–186 (IEAKAKQFIA…TSVIYKLTKR (170 aa)) is the FAD-binding PCMH-type domain. R162 is an active-site residue. Catalysis depends on S237, which acts as the Proton donor. The active site involves E333.

The protein belongs to the MurB family. Requires FAD as cofactor.

The protein localises to the cytoplasm. The catalysed reaction is UDP-N-acetyl-alpha-D-muramate + NADP(+) = UDP-N-acetyl-3-O-(1-carboxyvinyl)-alpha-D-glucosamine + NADPH + H(+). The protein operates within cell wall biogenesis; peptidoglycan biosynthesis. Cell wall formation. The chain is UDP-N-acetylenolpyruvoylglucosamine reductase from Flavobacterium johnsoniae (strain ATCC 17061 / DSM 2064 / JCM 8514 / BCRC 14874 / CCUG 350202 / NBRC 14942 / NCIMB 11054 / UW101) (Cytophaga johnsonae).